An 884-amino-acid chain; its full sequence is DNA mismatch repair protein MutS (884 aa).

651-658 (GPNMSGKS) contributes to the ATP binding site. Positions 843–884 (LRNQGKSQPAQKNCKKEPAPNRSPDPAVGDQLSLIPAPLFPD) are disordered.

The protein belongs to the DNA mismatch repair MutS family.

In terms of biological role, this protein is involved in the repair of mismatches in DNA. It is possible that it carries out the mismatch recognition step. This protein has a weak ATPase activity. This is DNA mismatch repair protein MutS from Synechococcus sp. (strain JA-2-3B'a(2-13)) (Cyanobacteria bacterium Yellowstone B-Prime).